Reading from the N-terminus, the 534-residue chain is Glucan endo-1,3-beta-glucosidase 12 (534 aa).

Positions 1–24 (MGQRLNLVFWIFVSILAFLNFGMA) are cleaved as a signal peptide. The Proton donor role is filled by Glu120. Asn127 carries an N-linked (GlcNAc...) asparagine glycan. Catalysis depends on Glu264, which acts as the Nucleophile. Asn336, Asn357, and Asn375 each carry an N-linked (GlcNAc...) asparagine glycan. Residues 348 to 379 (ENTTPVSPTNSTTGTSPSPSSSPIINGNSTVT) form a disordered region. The span at 349 to 377 (NTTPVSPTNSTTGTSPSPSSSPIINGNST) shows a compositional bias: low complexity. The cysteines at positions 392 and 455 are disulfide-linked. 3 N-linked (GlcNAc...) asparagine glycosylation sites follow: Asn485, Asn491, and Asn495. Ser507 is lipidated: GPI-anchor amidated serine. A propeptide spans 508–534 (STNEAFRQMVVAVSVLLPCFVVCSSIW) (removed in mature form).

The protein belongs to the glycosyl hydrolase 17 family. In terms of processing, contains two additional disulfide bonds.

Its subcellular location is the secreted. The protein resides in the cell wall. It localises to the cell membrane. The enzyme catalyses Hydrolysis of (1-&gt;3)-beta-D-glucosidic linkages in (1-&gt;3)-beta-D-glucans.. The sequence is that of Glucan endo-1,3-beta-glucosidase 12 from Arabidopsis thaliana (Mouse-ear cress).